We begin with the raw amino-acid sequence, 101 residues long: Urease subunit beta (101 aa).

It belongs to the urease beta subunit family. In terms of assembly, heterotrimer of UreA (gamma), UreB (beta) and UreC (alpha) subunits. Three heterotrimers associate to form the active enzyme.

The protein localises to the cytoplasm. The catalysed reaction is urea + 2 H2O + H(+) = hydrogencarbonate + 2 NH4(+). The protein operates within nitrogen metabolism; urea degradation; CO(2) and NH(3) from urea (urease route): step 1/1. The sequence is that of Urease subunit beta from Verminephrobacter eiseniae (strain EF01-2).